The following is a 152-amino-acid chain: Adenosine 5'-monophosphoramidase HNT1 (152 aa).

In terms of domain architecture, HIT spans 8-119; the sequence is IFCKIIKGEI…IPKKDEATGL (112 aa). Residues 33–34, Asn93, 99–101, and 106–108 contribute to the AMP site; these read DI, HQV, and HFH. The short motif at 104 to 108 is the Histidine triad motif element; sequence HVHFH. His106 functions as the Tele-AMP-histidine intermediate in the catalytic mechanism.

This sequence belongs to the HINT family. Homodimer. The cofactor is Mg(2+).

It carries out the reaction adenosine 5'-phosphoramidate + H2O = AMP + NH4(+). Hydrolyzes adenosine 5'-monophosphoramidate substrates such as AMP-morpholidate, AMP-N-alanine methyl ester, AMP-alpha-acetyl lysine methyl ester and AMP-NH2. The protein is Adenosine 5'-monophosphoramidase HNT1 of Candida albicans (strain SC5314 / ATCC MYA-2876) (Yeast).